The sequence spans 284 residues: Nucleotide-binding protein Sbal195_0713 (284 aa).

8–15 is an ATP binding site; that stretch reads GRSGSGKS. Position 56-59 (56-59) interacts with GTP; the sequence is DVRN.

Belongs to the RapZ-like family.

In terms of biological role, displays ATPase and GTPase activities. In Shewanella baltica (strain OS195), this protein is Nucleotide-binding protein Sbal195_0713.